The chain runs to 63 residues: U-reduvitoxin-Pr4a (63 aa).

The first 19 residues, 1–19, serve as a signal peptide directing secretion; the sequence is MKIFGLFLLIATYMALAFA. Disulfide bonds link Cys-24–Cys-40, Cys-31–Cys-45, and Cys-39–Cys-52.

This sequence belongs to the venom Ptu1-like knottin family. Expressed by the venom gland.

The protein localises to the secreted. In terms of biological role, binds reversibly and blocks P/Q-type voltage-gated calcium channels (Cav). The chain is U-reduvitoxin-Pr4a from Platymeris rhadamanthus (Red spot assassin bug).